The chain runs to 228 residues: Putative N-acetylmannosamine-6-phosphate 2-epimerase (228 aa).

It belongs to the NanE family.

The enzyme catalyses an N-acyl-D-glucosamine 6-phosphate = an N-acyl-D-mannosamine 6-phosphate. It functions in the pathway amino-sugar metabolism; N-acetylneuraminate degradation; D-fructose 6-phosphate from N-acetylneuraminate: step 3/5. In terms of biological role, converts N-acetylmannosamine-6-phosphate (ManNAc-6-P) to N-acetylglucosamine-6-phosphate (GlcNAc-6-P). This chain is Putative N-acetylmannosamine-6-phosphate 2-epimerase, found in Thermosynechococcus vestitus (strain NIES-2133 / IAM M-273 / BP-1).